The following is a 421-amino-acid chain: Replication factor C large subunit (421 aa).

An ATP-binding site is contributed by 63-70 (GPPGIGKT).

This sequence belongs to the activator 1 small subunits family. RfcL subfamily. In terms of assembly, heteromultimer composed of small subunits (RfcS) and large subunits (RfcL).

Its function is as follows. Part of the RFC clamp loader complex which loads the PCNA sliding clamp onto DNA. In Pyrobaculum calidifontis (strain DSM 21063 / JCM 11548 / VA1), this protein is Replication factor C large subunit.